Here is a 341-residue protein sequence, read N- to C-terminus: L-threonine 3-dehydrogenase (341 aa).

Residue cysteine 38 coordinates Zn(2+). Residues threonine 40 and histidine 43 each act as charge relay system in the active site. 6 residues coordinate Zn(2+): histidine 63, glutamate 64, cysteine 93, cysteine 96, cysteine 99, and cysteine 107. Residues isoleucine 175, aspartate 195, arginine 200, leucine 262–isoleucine 264, and isoleucine 286–tyrosine 287 contribute to the NAD(+) site.

The protein belongs to the zinc-containing alcohol dehydrogenase family. Homotetramer. Requires Zn(2+) as cofactor.

Its subcellular location is the cytoplasm. The catalysed reaction is L-threonine + NAD(+) = (2S)-2-amino-3-oxobutanoate + NADH + H(+). It participates in amino-acid degradation; L-threonine degradation via oxydo-reductase pathway; glycine from L-threonine: step 1/2. In terms of biological role, catalyzes the NAD(+)-dependent oxidation of L-threonine to 2-amino-3-ketobutyrate. The chain is L-threonine 3-dehydrogenase from Shewanella baltica (strain OS223).